The following is a 200-amino-acid chain: MAKLYFNYSTMNAGKSTMLLQASYNYQERGMRTVQLIAAFDERAGRGVIGSRIGLEASAIPFEPDEDLFRLVMTLSGEGAPISCVFVDEAHFMTPLHVWQLARIVDRLGIPVMVYGLRTDFQGKLFPASQELLAIADEMREVRTICHCGRKATMVVRLDAQGKVLHEGAQIDVGGNEKYVSLCRRHWDDEMNGAWIAEPV.

Residues Ser9–Ser16 and Asp88–His91 contribute to the ATP site. Catalysis depends on Glu89, which acts as the Proton acceptor. Residues Cys146, Cys148, Cys183, and His186 each contribute to the Zn(2+) site.

It belongs to the thymidine kinase family. Homotetramer.

It is found in the cytoplasm. It catalyses the reaction thymidine + ATP = dTMP + ADP + H(+). In Rhizobium etli (strain ATCC 51251 / DSM 11541 / JCM 21823 / NBRC 15573 / CFN 42), this protein is Thymidine kinase.